We begin with the raw amino-acid sequence, 307 residues long: ATP-dependent (S)-NAD(P)H-hydrate dehydratase (307 aa).

The 291-residue stretch at 1–291 (MDHFIKLLPK…DEIPKLVRDV (291 aa)) folds into the YjeF C-terminal domain. (6S)-NADPHX is bound by residues Gly96 and 150–156 (NIVEFSR). Residues 194 to 198 (KGEVD) and 214 to 223 (SSLRRCGGQG) each bind ATP. Residue Asp224 participates in (6S)-NADPHX binding.

It belongs to the NnrD/CARKD family. Mg(2+) is required as a cofactor.

The enzyme catalyses (6S)-NADHX + ATP = ADP + phosphate + NADH + H(+). It catalyses the reaction (6S)-NADPHX + ATP = ADP + phosphate + NADPH + H(+). Its function is as follows. Catalyzes the dehydration of the S-form of NAD(P)HX at the expense of ATP, which is converted to ADP. Together with NAD(P)HX epimerase, which catalyzes the epimerization of the S- and R-forms, the enzyme allows the repair of both epimers of NAD(P)HX, a damaged form of NAD(P)H that is a result of enzymatic or heat-dependent hydration. The sequence is that of ATP-dependent (S)-NAD(P)H-hydrate dehydratase from Caenorhabditis elegans.